Consider the following 347-residue polypeptide: Ferrochelatase (347 aa).

Cys158 contributes to the [2Fe-2S] cluster binding site. Residues His193 and Glu272 each coordinate Fe cation. Cys332, Cys339, and Cys341 together coordinate [2Fe-2S] cluster.

The protein belongs to the ferrochelatase family. In terms of assembly, homodimer. [2Fe-2S] cluster serves as cofactor.

It localises to the cytoplasm. It catalyses the reaction heme b + 2 H(+) = protoporphyrin IX + Fe(2+). It participates in porphyrin-containing compound metabolism; protoheme biosynthesis; protoheme from protoporphyrin-IX: step 1/1. Catalyzes the ferrous insertion into protoporphyrin IX. This chain is Ferrochelatase, found in Caulobacter vibrioides (strain ATCC 19089 / CIP 103742 / CB 15) (Caulobacter crescentus).